A 420-amino-acid chain; its full sequence is Probable endo-beta-1,4-glucanase celB (420 aa).

Positions 1–18 are cleaved as a signal peptide; that stretch reads MLRKLTPLALALLPLVAG. The N-linked (GlcNAc...) asparagine glycan is linked to Asn118. The active-site Nucleophile is the Glu215. Residue Glu220 is the Proton donor of the active site. N-linked (GlcNAc...) asparagine glycosylation is found at Asn234, Asn293, and Asn383.

It belongs to the glycosyl hydrolase 7 (cellulase C) family.

It localises to the secreted. The catalysed reaction is Endohydrolysis of (1-&gt;4)-beta-D-glucosidic linkages in cellulose, lichenin and cereal beta-D-glucans.. In terms of biological role, has endoglucanase activity on substrates containing beta-1,4 glycosidic bonds, like in carboxymethylcellulose (CMC), hydroxyethylcellulose (HEC) and beta-glucan. Involved in the degradation of complex natural cellulosic substrates. The sequence is that of Probable endo-beta-1,4-glucanase celB (celB) from Aspergillus terreus (strain NIH 2624 / FGSC A1156).